The primary structure comprises 351 residues: MRKIIHVDMDCFYAAVEMRDNPALRDIPIAIGGSRERRGVISTANYPARKFGVRSAMPTGMALKLCPHLTLLPGRFEAYKEASQHIREIFSRYTSRIEPLSLDEAYLDVTDSTYCHGSATLIAQEIRQTIFNELQLTASAGIAPVKFLAKIASDLNKPNGQYVITPADVPEFLKTLPLGKIPGVGKVSAARLETMGLRTCEDVQKYDLAMLLKRFGKFGRVLWERSQGIDERDVNNERLRKSIGVERTLAEDIHEWAECEAIIERLYPELERRLAKVKPDLLIARQGVKLKFNDFQLTTQEHVWPRLSKDDLITTARKTWNERRGGRGVRLVGLHVTLLDPQLERQLLLGL.

The region spanning 4–185 (IIHVDMDCFY…LPLGKIPGVG (182 aa)) is the UmuC domain. 2 residues coordinate Mg(2+): D8 and D103. E104 is an active-site residue.

It belongs to the DNA polymerase type-Y family. In terms of assembly, monomer. Mg(2+) is required as a cofactor.

The protein localises to the cytoplasm. It carries out the reaction DNA(n) + a 2'-deoxyribonucleoside 5'-triphosphate = DNA(n+1) + diphosphate. In terms of biological role, poorly processive, error-prone DNA polymerase involved in untargeted mutagenesis. Copies undamaged DNA at stalled replication forks, which arise in vivo from mismatched or misaligned primer ends. These misaligned primers can be extended by PolIV. Exhibits no 3'-5' exonuclease (proofreading) activity. May be involved in translesional synthesis, in conjunction with the beta clamp from PolIII. The polypeptide is DNA polymerase IV (Citrobacter koseri (strain ATCC BAA-895 / CDC 4225-83 / SGSC4696)).